Consider the following 877-residue polypeptide: DNA polymerase I (877 aa).

In terms of domain architecture, 5'-3' exonuclease spans 180-270; it reads TPAQFIDLKA…EIGLDDTLLK (91 aa). The 3'-5' exonuclease domain maps to 308-468; that stretch reads DEIDFEIVTD…AKEKMMAELL (161 aa).

The protein belongs to the DNA polymerase type-A family. Single-chain monomer with multiple functions.

The catalysed reaction is DNA(n) + a 2'-deoxyribonucleoside 5'-triphosphate = DNA(n+1) + diphosphate. In terms of biological role, in addition to polymerase activity, this DNA polymerase exhibits 3'-5' and 5'-3' exonuclease activity. In Lactococcus lactis subsp. lactis (strain IL1403) (Streptococcus lactis), this protein is DNA polymerase I (polA).